A 134-amino-acid chain; its full sequence is Translation initiation factor 2 subunit beta (134 aa).

A compositionally biased stretch (basic and acidic residues) spans 1–12 (MGYEEQLDRALE). Residues 1 to 32 (MGYEEQLDRALEETPDIEGTAARFSVPDPDVR) are disordered.

The protein belongs to the eIF-2-beta/eIF-5 family. Heterotrimer composed of an alpha, a beta and a gamma chain.

In terms of biological role, eIF-2 functions in the early steps of protein synthesis by forming a ternary complex with GTP and initiator tRNA. This is Translation initiation factor 2 subunit beta from Natronomonas pharaonis (strain ATCC 35678 / DSM 2160 / CIP 103997 / JCM 8858 / NBRC 14720 / NCIMB 2260 / Gabara) (Halobacterium pharaonis).